The chain runs to 243 residues: Transmembrane protein 174 (243 aa).

2 helical membrane-spanning segments follow: residues Leu40–Ile60 and Leu73–Phe93.

In terms of assembly, interacts with SLC34A1; regulates SLC34A1 internalization by PTH and FGF23.

It is found in the endoplasmic reticulum membrane. The protein localises to the apical cell membrane. Regulator of plasma phosphate homeostasis. Decreases serum inorganic phosphate (Pi) uptake by regulating the sodium-phosphate cotransporter SLC34A1 trafficking by PTH and FGF23 in the kidney. This chain is Transmembrane protein 174 (TMEM174), found in Pongo abelii (Sumatran orangutan).